A 308-amino-acid polypeptide reads, in one-letter code: Palmitoyltransferase ZDHHC7 (308 aa).

Residues 1–50 (MQPSGHRLRDIEHHPLLTDNDNYDSASSSSSETDMADRVWFIRDGCGMVC) lie on the Cytoplasmic side of the membrane. A helical membrane pass occupies residues 51 to 71 (AVMTWLLVVYADFVVTFVMLL). Residues 72–75 (PSKD) lie on the Lumenal side of the membrane. The chain crosses the membrane as a helical span at residues 76 to 96 (FWYSVVNGVLFNCLAVLALSS). At 97-173 (HLRTMLTDPG…NNCVGEKNQR (77 aa)) the chain is on the cytoplasmic side. A DHHC domain is found at 130-180 (YKCPKCCCIKPERAHHCSICKRCIRKMDHHCPWVNNCVGEKNQRFFVLFTM). The S-palmitoyl cysteine intermediate role is filled by C160. Residues 174 to 194 (FFVLFTMYIALSSVHALILCG) form a helical membrane-spanning segment. Residues 195–217 (LQFISCVRGQWTECSDFSPPITV) are Lumenal-facing. A helical transmembrane segment spans residues 218–238 (ILLVFLCLEGLLFFTFTAVMF). Topologically, residues 239–308 (GTQIHSICND…TRKGGPEFSV (70 aa)) are cytoplasmic.

This sequence belongs to the DHHC palmitoyltransferase family. In terms of assembly, homooligomers. Heterooligomers with ZDHHC3. In terms of processing, autopalmitoylated. Ubiquitously expressed, with highest levels in liver, kidney and brain. Expressed in all brain regions.

The protein resides in the golgi apparatus membrane. The enzyme catalyses L-cysteinyl-[protein] + hexadecanoyl-CoA = S-hexadecanoyl-L-cysteinyl-[protein] + CoA. The catalysed reaction is L-cysteinyl-[protein] + tetradecanoyl-CoA = S-tetradecanoyl-L-cysteinyl-[protein] + CoA. It carries out the reaction L-cysteinyl-[protein] + octadecanoyl-CoA = S-octadecanoyl-L-cysteinyl-[protein] + CoA. In terms of biological role, golgi-localized palmitoyltransferase that catalyzes the addition of palmitate onto various protein substrates and therefore functions in several unrelated biological processes. Has no stringent fatty acid selectivity and in addition to palmitate can also transfer onto target proteins myristate from tetradecanoyl-CoA and stearate from octadecanoyl-CoA. Palmitoylates sex steroid hormone receptors, including ESR1, PGR and AR, thereby regulating their targeting to the plasma membrane and their function in rapid intracellular signaling upon binding of sex hormones. Palmitoylates GNAQ, a heterotrimeric G protein, regulating its dynamic localization at the plasma membrane and is thereby involved in GNAQ-dependent G protein-coupled receptor signaling pathways. Also functions in ligand-induced cell death by regulating the FAS signaling pathway through the palmitoylation and stabilization of the receptor at the plasma membrane. In epithelial cells, palmitoylates SCRIB and regulates its localization to the plasma membrane, regulating indirectly cell polarity and differentiation. Also palmitoylates JAM3 and promotes its expression at tight junctions and regulates its function in cell migration. Palmitoylates the glucose transporter GLUT4/SLC2A4 and controls the insulin-dependent translocation of GLUT4 to the plasma membrane. In brain, could also palmitoylate SNAP25 and DLG4/PSD95. Could also palmitoylate DNAJC5 and regulate its localization to the Golgi membrane. Could also palmitoylate NCDN. May play a role in follicle stimulation hormone (FSH) activation of testicular Sertoli cells. Activates pyroptosis by catalyzing palmitoylation of gasdermin-D (GSDMD). The protein is Palmitoyltransferase ZDHHC7 of Mus musculus (Mouse).